The following is a 419-amino-acid chain: MLSSFPVVLLETMSHYTDEPRFTIEQIDLLQRLRRTGMTKHEILHALETLDRLDQEHSDKFGRRSSYGGSSYGNSTNNVPASSSTATASTQTQHSGMSPSPSNSYDTSPLPCTTNQNGRENNDRLSTSNGKMSPSRYHANSMGQRSYSFEASEEDLDVDDKVEELMRRDSSVIKEEIKAFLANRRISQAVVAQVTGISQSRISHWLLQQGSDLSEQKKRAFYRWYQLEKTNPGATLSMRPAPIPIEDPEWRQTPPPVSATPGTFRLRRGSRFTWRKECLAVMESYFNENQYPDEAKREEIANACNAVIQKPGKKLSDLERVTSLKVYNWFANRRKEIKRRANIAAILESHGIDVQSPGGHSNSDDVDGNDYSEQDDSTSHSDHQDPISLAVEMAAVNHTILALARQGANEIKTEALDDD.

The region spanning 18-49 is the HNF-p1 domain; the sequence is DEPRFTIEQIDLLQRLRRTGMTKHEILHALET. Positions 56 to 152 are disordered; it reads EHSDKFGRRS…GQRSYSFEAS (97 aa). Residue Lys60 forms a Glycyl lysine isopeptide (Lys-Gly) (interchain with G-Cter in SUMO2) linkage. Composition is skewed to low complexity over residues 64–73 and 81–93; these read RSSYGGSSYG and ASSS…TQTQ. Polar residues predominate over residues 94–132; that stretch reads HSGMSPSPSNSYDTSPLPCTTNQNGRENNDRLSTSNGKM. Lys131 is covalently cross-linked (Glycyl lysine isopeptide (Lys-Gly) (interchain with G-Cter in SUMO2)). A POU-specific atypical domain is found at 145–241; it reads RSYSFEASEE…PGATLSMRPA (97 aa). Phosphoserine is present on Ser148. Lys161 participates in a covalent cross-link: Glycyl lysine isopeptide (Lys-Gly) (interchain with G-Cter in SUMO2). A Phosphoserine modification is found at Ser170. Residues Lys174, Lys217, and Lys310 each participate in a glycyl lysine isopeptide (Lys-Gly) (interchain with G-Cter in SUMO2) cross-link. Residues 267-341 constitute a DNA-binding region (homeobox); that stretch reads RRGSRFTWRK…NRRKEIKRRA (75 aa). Positions 352-384 are disordered; sequence IDVQSPGGHSNSDDVDGNDYSEQDDSTSHSDHQ. Positions 364–376 are enriched in acidic residues; it reads DDVDGNDYSEQDD. A Glycyl lysine isopeptide (Lys-Gly) (interchain with G-Cter in SUMO1); alternate cross-link involves residue Lys412. Residue Lys412 forms a Glycyl lysine isopeptide (Lys-Gly) (interchain with G-Cter in SUMO2); alternate linkage.

As to quaternary structure, associates with the telomerase holoenzyme complex. Interacts with DKC1, XRCC6 and COIL.

The protein resides in the nucleus. It localises to the cytoplasm. Its subcellular location is the chromosome. The protein localises to the telomere. It is found in the cajal body. The protein resides in the PML body. Binds directly to 5'-TTAGGG-3' repeats in telomeric DNA. Associates with the telomerase complex at sites of active telomere processing and positively regulates telomere elongation. Important for TERT binding to chromatin, indicating a role in recruitment of the telomerase complex to telomeres. Also plays a role in the alternative lengthening of telomeres (ALT) pathway in telomerase-negative cells where it promotes formation and/or maintenance of ALT-associated promyelocytic leukemia bodies (APBs). Enhances formation of telomere C-circles in ALT cells, suggesting a possible role in telomere recombination. Might also be involved in the DNA damage response at telomeres. The protein is Homeobox-containing protein 1 (Hmbox1) of Mus musculus (Mouse).